We begin with the raw amino-acid sequence, 118 residues long: Eukaryotic translation initiation factor 4E-binding protein 1 (118 aa).

At Ser2 the chain carries N-acetylserine. The segment at 27-48 (VQLPPGDYSTTPGGTLFSTTPG) is disordered. The segment covering 34–48 (YSTTPGGTLFSTTPG) has biased composition (polar residues). Thr37 bears the Phosphothreonine; by MTOR mark. A Phosphothreonine modification is found at Thr41. Ser44 is modified (phosphoserine). Thr46 carries the post-translational modification Phosphothreonine; by MTOR. At Thr50 the chain carries Phosphothreonine. At Tyr54 the chain carries Phosphotyrosine. Residues 54 to 60 (YDRKFLM) carry the YXXXXLphi motif motif. Lys57 is covalently cross-linked (Glycyl lysine isopeptide (Lys-Gly) (interchain with G-Cter in ubiquitin)). Positions 64-118 (NSPVTKTPPRDLPTIPGVTSPTGDEPPTEARQNHLRSSPEDKPAGGEESQFEMDI) are disordered. Ser65 carries the post-translational modification Phosphoserine; by DYRK2, MAPK1, MAPK3 and MTOR. Thr70 carries the post-translational modification Phosphothreonine; by MTOR. Thr77 carries the post-translational modification Phosphothreonine. 2 positions are modified to phosphoserine: Ser83 and Ser100. Position 101 is a phosphoserine; by DYRK2 (Ser101). At Ser112 the chain carries Phosphoserine. The short motif at 114–118 (FEMDI) is the TOS motif element.

The protein belongs to the eIF4E-binding protein family. As to quaternary structure, hypophosphorylated EIF4EBP1 competes with EIF4G1/EIF4G3 to interact with EIF4E; insulin stimulated MAP-kinase (MAPK1 and MAPK3) or mTORC1 phosphorylation of EIF4EBP1 causes dissociation of the complex allowing EIF4G1/EIF4G3 to bind and consequent initiation of translation. Interacts (via TOS motif) with RPTOR; promoting phosphorylation by mTORC1. In terms of processing, phosphorylated on serine and threonine residues in response to insulin, EGF and PDGF. Phosphorylation at Thr-37, Thr-46, Ser-65 and Thr-70, corresponding to the hyperphosphorylated form, is regulated by mTORC1 and abolishes binding to EIF4E. Post-translationally, ubiquitinated: when eIF4E levels are low, hypophosphorylated form is ubiquitinated by the BCR(KLHL25) complex, leading to its degradation and serving as a homeostatic mechanism to maintain translation and prevent eIF4E inhibition when eIF4E levels are low. Not ubiquitinated when hyperphosphorylated (at Thr-37, Thr-46, Ser-65 and Thr-70) or associated with eIF4E.

The protein localises to the cytoplasm. Its subcellular location is the nucleus. Functionally, repressor of translation initiation that regulates EIF4E activity by preventing its assembly into the eIF4F complex: hypophosphorylated form competes with EIF4G1/EIF4G3 and strongly binds to EIF4E, leading to repress translation. In contrast, hyperphosphorylated form dissociates from EIF4E, allowing interaction between EIF4G1/EIF4G3 and EIF4E, leading to initiation of translation. Mediates the regulation of protein translation by hormones, growth factors and other stimuli that signal through the MAP kinase and mTORC1 pathways. The polypeptide is Eukaryotic translation initiation factor 4E-binding protein 1 (EIF4EBP1) (Bos taurus (Bovine)).